The sequence spans 208 residues: Redox-sensing transcriptional repressor Rex (208 aa).

Residues I18–I57 constitute a DNA-binding region (H-T-H motif). Residue G92–G97 coordinates NAD(+).

It belongs to the transcriptional regulatory Rex family. As to quaternary structure, homodimer.

The protein localises to the cytoplasm. In terms of biological role, modulates transcription in response to changes in cellular NADH/NAD(+) redox state. The polypeptide is Redox-sensing transcriptional repressor Rex (Latilactobacillus sakei subsp. sakei (strain 23K) (Lactobacillus sakei subsp. sakei)).